Consider the following 432-residue polypeptide: Monooxygenase penA (432 aa).

Residues 7–29 (FKIAIIGAGPAGLTLASLLTASP) form a helical membrane-spanning segment. A glycan (N-linked (GlcNAc...) asparagine) is linked at N33.

This sequence belongs to the aromatic-ring hydroxylase family. The cofactor is FAD.

Its subcellular location is the membrane. It participates in secondary metabolite biosynthesis. The protein operates within alkaloid biosynthesis. It functions in the pathway mycotoxin biosynthesis. Its function is as follows. Monooxygenase; part of the gene cluster that mediates the biosynthesis of penigequinolones, potent insecticidal alkaloids that contain a highly modified 10-carbon prenyl group. The first stage is catalyzed by the nonribosomal peptide synthetase penN that condenses anthranilic acid and O-methyl-L-tyrosine to produce 4'-methoxycyclopeptin. 4'-methoxycyclopeptin is then converted to 4'-methoxydehydrocyclopeptin by the ketoglutarate-dependent dioxygenase penM through dehydrogenation to form a double bond between C-alpha and C-beta of the O-methyltyrosine side chain. PenM also converts its first product methoxydehydrocyclopeptin to 4'-methoxycyclopenin. The following conversion of 4'methoxycyclopenin into 4'-methoxyviridicatin is catalyzed by the cyclopenase penL. 4'-methoxyviridicatin is the precursor of quinolone natural products, and is further converted to quinolinone B. The prenyltransferase penI then catalyzes the canonical Friedel-Crafts alkylation of quinolinone B with dimethylallyl cation to yield dimethylallyl quinolone, which is subjected to FAD-dependent dehydrogenation by the FAD-linked oxidoreductase penH to yield conjugated aryl diene. The delta(3') double bond then serves as the site of the second alkylation with DMAPP catalyzed by the prenyltransferase penG to yield a carbenium ion intermediate, which can be attacked by H(2)O to yield a styrenyl quinolone containing a C3'-hydroxyprenyl chain, or undergo cyclization to yield yaequinolones J1 and J2. The conversion of the styrenyl quinolone into the tetrahydrofuran-containing yaequinolone C is performed by the FAD-dependent monooxygenase penE and involves epoxidation of the terminal C7'-C8' olefin, followed by epoxide ring opening initiated by the C3' hydroxyl group. The predicted cysteine hydrolase penJ acts as an epoxide hydrolase that enhances the rate of the 5-exo-tet cyclization step, increasing the yield of yaequinolone C. PenF catalyzes the cationic rearrangement of the epoxide formed by penE (before ring opening to produce yaequinolone C) into yaequinolone D. Finally, the short-chain dehydrogenase/reductase (SDR)-like reductase penD, catalyzes both the dehydration of yaequinolone D and the reduction of the resulting oxonium to yield penigequinolone. The protein is Monooxygenase penA of Penicillium thymicola.